Reading from the N-terminus, the 181-residue chain is Adenylate kinase 2 (181 aa).

Residue 10–15 coordinates ATP; that stretch reads GSGKST. The segment at 30–59 is NMP; it reads SMGGILREAIANATPLGIKAKPYVERGDLL. AMP contacts are provided by residues Arg36, 57–59, 85–88, and Gln92; these read DLL and GYPR. The LID stretch occupies residues 126-132; the sequence is NRSLFDD. An ATP-binding site is contributed by Arg127. Arg140 is a binding site for AMP. Position 168 (Pro168) interacts with ATP.

Belongs to the adenylate kinase family. In terms of assembly, monomer.

The protein resides in the cytoplasm. It carries out the reaction AMP + ATP = 2 ADP. It participates in purine metabolism; AMP biosynthesis via salvage pathway; AMP from ADP: step 1/1. In terms of biological role, catalyzes the reversible transfer of the terminal phosphate group between ATP and AMP. Plays an important role in cellular energy homeostasis and in adenine nucleotide metabolism. This Synechocystis sp. (strain ATCC 27184 / PCC 6803 / Kazusa) protein is Adenylate kinase 2.